Here is a 235-residue protein sequence, read N- to C-terminus: uncharacterized protein (235 aa).

The next 2 helical transmembrane spans lie at 167 to 187 (AFKL…LNEL) and 190 to 210 (LFAY…LLLW).

It localises to the membrane. This is an uncharacterized protein from Saccharomyces cerevisiae (strain ATCC 204508 / S288c) (Baker's yeast).